A 160-amino-acid polypeptide reads, in one-letter code: Putative pre-16S rRNA nuclease (160 aa).

Belongs to the YqgF nuclease family.

It is found in the cytoplasm. Functionally, could be a nuclease involved in processing of the 5'-end of pre-16S rRNA. In Cutibacterium acnes (strain DSM 16379 / KPA171202) (Propionibacterium acnes), this protein is Putative pre-16S rRNA nuclease.